The primary structure comprises 1028 residues: Sodium/potassium-transporting ATPase subunit alpha-4 (1028 aa).

Residues 1–36 (MEPGKETAATSEQKPRPTLRASNTNRQPKVKRRKKD) form a disordered region. Residues 1–92 (MEPGKETAAT…NVLTPPPTTP (92 aa)) lie on the Cytoplasmic side of the membrane. Residues 87-89 (PPP) are interaction with phosphoinositide-3 kinase. Residues 93 to 113 (EWIKFCKQLFGGFSLLLWTGS) form a helical membrane-spanning segment. Topologically, residues 114-137 (LLCFLAYGIHVSYYQENANKDNLY) are extracellular. The chain crosses the membrane as a helical span at residues 138–158 (LGIVLSAVVIITGCFSYYQEA). Topologically, residues 159 to 294 (KSSKIMESFK…MGKTPIATEI (136 aa)) are cytoplasmic. Residues 295 to 314 (EHFIHIITAVAVFLGVTFFF) form a helical membrane-spanning segment. Topologically, residues 315–326 (LSLILGYTWLDA) are extracellular. Residues 327 to 344 (VIFLIGIIVANVPEGLLA) form a helical membrane-spanning segment. The Cytoplasmic segment spans residues 345-777 (TVTVCLTLTA…EEGRLIFDNL (433 aa)). Asp-382 (4-aspartylphosphate intermediate) is an active-site residue. The Mg(2+) site is built by Asp-722 and Asp-726. The helical transmembrane segment at 778 to 797 (KKSIAYTLTSNIPEITPFLL) threads the bilayer. The Extracellular portion of the chain corresponds to 798-807 (FIVLSIPLPL). A helical transmembrane segment spans residues 808–828 (GTITILCIDLGTDMVPAISLA). Residues 829–848 (YETPESDIMKRLPRNPKTDN) are Cytoplasmic-facing. The helical transmembrane segment at 849-871 (LVNDRLIGMAYGQIGMIQALAGF) threads the bilayer. Topologically, residues 872–923 (FTYFVILAENGFKPLDLLGIRLYWDDTNLNDLEDTYGQQWTYEQRKVVEFTC) are extracellular. Residues 924 to 943 (QTAFFISIVIVQWADLIICK) form a helical membrane-spanning segment. At 944 to 956 (TRRNSLFKQGMKN) the chain is on the cytoplasmic side. Residue Ser-948 is modified to Phosphoserine; by PKA. The chain crosses the membrane as a helical span at residues 957 to 975 (KVLIFGLLEETILAACLSY). At 976-990 (IPGMDVALRMYPLKI) the chain is on the extracellular side. The helical transmembrane segment at 991-1011 (NWWFCALPYSVLIFIYDEVRK) threads the bilayer. The Cytoplasmic portion of the chain corresponds to 1012-1028 (LIIRRRPGGWLEKETYY).

It belongs to the cation transport ATPase (P-type) (TC 3.A.3) family. Type IIC subfamily. The sodium/potassium-transporting ATPase is composed of a catalytic alpha subunit, an auxiliary non-catalytic beta subunit and an additional regulatory subunit.

It localises to the cell membrane. It carries out the reaction K(+)(out) + Na(+)(in) + ATP + H2O = K(+)(in) + Na(+)(out) + ADP + phosphate + H(+). With respect to regulation, specifically inhibited by an endogenous cardiac glycoside, ouabain. Its function is as follows. This is the catalytic component of the active enzyme, which catalyzes the hydrolysis of ATP coupled with the exchange of sodium and potassium ions across the plasma membrane. This action creates the electrochemical gradient of sodium and potassium ions, providing the energy for active transport of various nutrients. Plays a role in sperm motility. The polypeptide is Sodium/potassium-transporting ATPase subunit alpha-4 (Atp1a4) (Rattus norvegicus (Rat)).